Reading from the N-terminus, the 46-residue chain is MISSHQKTLTDKELALISGGKTHYPTNAWKSLWKGFWESLRYTDGF.

Residues 1-20 constitute a propeptide that is removed on maturation; sequence MISSHQKTLTDKELALISGG.

It localises to the secreted. Functionally, has a bactericidal effect on sensitive cells but not a bacteriolytic effect. This Lactobacillus acidophilus protein is Bacteriocin acidocin 8912 (acdT).